The primary structure comprises 283 residues: Pantothenate synthetase (283 aa).

33-40 (MGALHEGH) contributes to the ATP binding site. Catalysis depends on His-40, which acts as the Proton donor. A (R)-pantoate-binding site is contributed by Gln-64. Gln-64 is a binding site for beta-alanine. 150–153 (GEKD) lines the ATP pocket. Residue Gln-156 participates in (R)-pantoate binding. ATP is bound by residues Ile-179 and 187-190 (MSSR).

Belongs to the pantothenate synthetase family. As to quaternary structure, homodimer.

The protein localises to the cytoplasm. It carries out the reaction (R)-pantoate + beta-alanine + ATP = (R)-pantothenate + AMP + diphosphate + H(+). It participates in cofactor biosynthesis; (R)-pantothenate biosynthesis; (R)-pantothenate from (R)-pantoate and beta-alanine: step 1/1. Its function is as follows. Catalyzes the condensation of pantoate with beta-alanine in an ATP-dependent reaction via a pantoyl-adenylate intermediate. This is Pantothenate synthetase from Mesorhizobium japonicum (strain LMG 29417 / CECT 9101 / MAFF 303099) (Mesorhizobium loti (strain MAFF 303099)).